The following is a 241-amino-acid chain: Ribonuclease PH (241 aa).

Residues R89 and 127-129 (GTR) contribute to the phosphate site.

This sequence belongs to the RNase PH family. As to quaternary structure, homohexameric ring arranged as a trimer of dimers.

It catalyses the reaction tRNA(n+1) + phosphate = tRNA(n) + a ribonucleoside 5'-diphosphate. Functionally, phosphorolytic 3'-5' exoribonuclease that plays an important role in tRNA 3'-end maturation. Removes nucleotide residues following the 3'-CCA terminus of tRNAs; can also add nucleotides to the ends of RNA molecules by using nucleoside diphosphates as substrates, but this may not be physiologically important. Probably plays a role in initiation of 16S rRNA degradation (leading to ribosome degradation) during starvation. The chain is Ribonuclease PH from Xylella fastidiosa (strain M23).